We begin with the raw amino-acid sequence, 333 residues long: Fructose-1,6-bisphosphatase class 1 1 (333 aa).

Mg(2+) is bound by residues Glu81, Asp100, Leu102, and Asp103. Substrate-binding positions include 103-106 (DGSS) and Asn191. Glu263 contributes to the Mg(2+) binding site.

Belongs to the FBPase class 1 family. In terms of assembly, homotetramer. Mg(2+) serves as cofactor.

The protein resides in the cytoplasm. The enzyme catalyses beta-D-fructose 1,6-bisphosphate + H2O = beta-D-fructose 6-phosphate + phosphate. The protein operates within carbohydrate biosynthesis; Calvin cycle. The protein is Fructose-1,6-bisphosphatase class 1 1 of Cereibacter sphaeroides (strain ATCC 17029 / ATH 2.4.9) (Rhodobacter sphaeroides).